A 152-amino-acid polypeptide reads, in one-letter code: D-aminoacyl-tRNA deacylase (152 aa).

A Gly-cisPro motif, important for rejection of L-amino acids motif is present at residues 142-143; it reads GP.

It belongs to the DTD family. Homodimer.

It localises to the cytoplasm. It carries out the reaction glycyl-tRNA(Ala) + H2O = tRNA(Ala) + glycine + H(+). The enzyme catalyses a D-aminoacyl-tRNA + H2O = a tRNA + a D-alpha-amino acid + H(+). In terms of biological role, an aminoacyl-tRNA editing enzyme that deacylates mischarged D-aminoacyl-tRNAs. Also deacylates mischarged glycyl-tRNA(Ala), protecting cells against glycine mischarging by AlaRS. Acts via tRNA-based rather than protein-based catalysis; rejects L-amino acids rather than detecting D-amino acids in the active site. By recycling D-aminoacyl-tRNA to D-amino acids and free tRNA molecules, this enzyme counteracts the toxicity associated with the formation of D-aminoacyl-tRNA entities in vivo and helps enforce protein L-homochirality. The polypeptide is D-aminoacyl-tRNA deacylase (Burkholderia vietnamiensis (strain G4 / LMG 22486) (Burkholderia cepacia (strain R1808))).